The chain runs to 434 residues: Alpha-enolase (434 aa).

Ser-2 is modified (N-acetylserine). A Mg(2+)-binding site is contributed by Ser-40. Tyr-44 carries the phosphotyrosine modification. N6-acetyllysine; alternate is present on Lys-60. An N6-succinyllysine; alternate modification is found at Lys-60. Residue Lys-71 is modified to N6-acetyllysine. Lys-89 bears the N6-acetyllysine; alternate mark. Lys-89 is modified (N6-succinyllysine; alternate). An N6-acetyllysine mark is found at Lys-92 and Lys-126. 2 residues coordinate substrate: His-158 and Glu-167. N6-acetyllysine occurs at positions 193 and 199. Position 202 is an N6-acetyllysine; alternate (Lys-202). Residue Lys-202 forms a Glycyl lysine isopeptide (Lys-Gly) (interchain with G-Cter in SUMO2); alternate linkage. The active-site Proton donor is Glu-210. Lys-228 and Lys-233 each carry N6-acetyllysine; alternate. Residue Lys-228 is modified to N6-succinyllysine; alternate. Residue Lys-228 is modified to N6-(2-hydroxyisobutyryl)lysine; alternate. An N6-malonyllysine; alternate modification is found at Lys-233. Asp-245 provides a ligand contact to Mg(2+). Residue Ser-254 is modified to Phosphoserine. Lys-256 carries the N6-acetyllysine modification. Ser-263 carries the phosphoserine modification. Residue Lys-281 is modified to N6-acetyllysine; alternate. An N6-(2-hydroxyisobutyryl)lysine; alternate modification is found at Lys-281. Phosphotyrosine is present on Tyr-287. A Phosphoserine modification is found at Ser-291. Mg(2+) is bound by residues Glu-293 and Asp-318. The substrate site is built by Glu-293 and Asp-318. Residues Lys-335 and Lys-343 each carry the N6-acetyllysine modification. Residue Lys-343 is the Proton acceptor of the active site. Residues 370–373 (SHRS) and Lys-394 contribute to the substrate site. Residues 405 to 434 (AKYNQILRIEEELGSKAKFAGRSFRNPLAK) form a required for interaction with PLG region. Lys-406 bears the N6-acetyllysine mark. At Lys-420 the chain carries N6-acetyllysine; alternate. The residue at position 420 (Lys-420) is an N6-succinyllysine; alternate. Lys-420 bears the N6-malonyllysine; alternate mark.

It belongs to the enolase family. As to quaternary structure, mammalian enolase is composed of 3 isozyme subunits, alpha, beta and gamma, which can form homodimers or heterodimers which are cell-type and development-specific. ENO1 interacts with PLG in the neuronal plasma membrane and promotes its activation. The C-terminal lysine is required for this binding. In vitro, interacts with several glycolytic enzymes including PKM, PGM, CKM and aldolase. Also binds troponin, in vitro. Interacts with ENO4 and PGAM2. Interacts with CMTM6. It depends on Mg(2+) as a cofactor. In terms of processing, ISGylated. Post-translationally, lysine 2-hydroxyisobutyrylation (Khib) by p300/EP300 activates the phosphopyruvate hydratase activity. Testis. Found in the principal piece of sperm tail (at protein level). The alpha/alpha homodimer is expressed in embryo and in most adult tissues. The alpha/beta heterodimer and the beta/beta homodimer are found in striated muscle, and the alpha/gamma heterodimer and the gamma/gamma homodimer in neurons. In striated muscle, expression of ENO1 appears to be independent of fiber type.

The protein localises to the cytoplasm. Its subcellular location is the cell membrane. The enzyme catalyses (2R)-2-phosphoglycerate = phosphoenolpyruvate + H2O. Its pathway is carbohydrate degradation; glycolysis; pyruvate from D-glyceraldehyde 3-phosphate: step 4/5. Its function is as follows. Glycolytic enzyme the catalyzes the conversion of 2-phosphoglycerate to phosphoenolpyruvate. In addition to glycolysis, involved in various processes such as growth control, hypoxia tolerance and allergic responses. May also function in the intravascular and pericellular fibrinolytic system due to its ability to serve as a receptor and activator of plasminogen on the cell surface of several cell-types such as leukocytes and neurons. Stimulates immunoglobulin production. This is Alpha-enolase (Eno1) from Mus musculus (Mouse).